The sequence spans 213 residues: Leucyl/phenylalanyl-tRNA--protein transferase (213 aa).

This sequence belongs to the L/F-transferase family.

It is found in the cytoplasm. It carries out the reaction N-terminal L-lysyl-[protein] + L-leucyl-tRNA(Leu) = N-terminal L-leucyl-L-lysyl-[protein] + tRNA(Leu) + H(+). It catalyses the reaction N-terminal L-arginyl-[protein] + L-leucyl-tRNA(Leu) = N-terminal L-leucyl-L-arginyl-[protein] + tRNA(Leu) + H(+). The enzyme catalyses L-phenylalanyl-tRNA(Phe) + an N-terminal L-alpha-aminoacyl-[protein] = an N-terminal L-phenylalanyl-L-alpha-aminoacyl-[protein] + tRNA(Phe). Functionally, functions in the N-end rule pathway of protein degradation where it conjugates Leu, Phe and, less efficiently, Met from aminoacyl-tRNAs to the N-termini of proteins containing an N-terminal arginine or lysine. In Rhodospirillum rubrum (strain ATCC 11170 / ATH 1.1.1 / DSM 467 / LMG 4362 / NCIMB 8255 / S1), this protein is Leucyl/phenylalanyl-tRNA--protein transferase.